The primary structure comprises 317 residues: Thymidylate synthase (317 aa).

DUMP-binding positions include Arg-24 and 179–180 (RR). The Nucleophile role is filled by Cys-199. DUMP-binding positions include 219–222 (RSAD), Asn-230, and 260–262 (HIY). Asp-222 provides a ligand contact to (6R)-5,10-methylene-5,6,7,8-tetrahydrofolate. Ala-316 is a binding site for (6R)-5,10-methylene-5,6,7,8-tetrahydrofolate.

The protein belongs to the thymidylate synthase family. Bacterial-type ThyA subfamily. In terms of assembly, homodimer.

The protein localises to the cytoplasm. The enzyme catalyses dUMP + (6R)-5,10-methylene-5,6,7,8-tetrahydrofolate = 7,8-dihydrofolate + dTMP. The protein operates within pyrimidine metabolism; dTTP biosynthesis. Its function is as follows. Catalyzes the reductive methylation of 2'-deoxyuridine-5'-monophosphate (dUMP) to 2'-deoxythymidine-5'-monophosphate (dTMP) while utilizing 5,10-methylenetetrahydrofolate (mTHF) as the methyl donor and reductant in the reaction, yielding dihydrofolate (DHF) as a by-product. This enzymatic reaction provides an intracellular de novo source of dTMP, an essential precursor for DNA biosynthesis. This is Thymidylate synthase from Oceanobacillus iheyensis (strain DSM 14371 / CIP 107618 / JCM 11309 / KCTC 3954 / HTE831).